The following is a 238-amino-acid chain: Ribosomal RNA small subunit methyltransferase G (238 aa).

S-adenosyl-L-methionine contacts are provided by residues Gly-77, Phe-82, 128–129 (AE), and Arg-147. Residues 219–238 (KKTPARYPRKPGTPNKQPIQ) form a disordered region.

It belongs to the methyltransferase superfamily. RNA methyltransferase RsmG family.

It localises to the cytoplasm. In terms of biological role, specifically methylates the N7 position of guanine in position 535 of 16S rRNA. The chain is Ribosomal RNA small subunit methyltransferase G from Geobacillus thermodenitrificans (strain NG80-2).